We begin with the raw amino-acid sequence, 160 residues long: Cyclic pyranopterin monophosphate synthase (160 aa).

Substrate-binding positions include 77 to 79 and 114 to 115; these read MCH and ME. D129 is an active-site residue.

This sequence belongs to the MoaC family. Homohexamer; trimer of dimers.

The catalysed reaction is (8S)-3',8-cyclo-7,8-dihydroguanosine 5'-triphosphate = cyclic pyranopterin phosphate + diphosphate. Its pathway is cofactor biosynthesis; molybdopterin biosynthesis. Its function is as follows. Catalyzes the conversion of (8S)-3',8-cyclo-7,8-dihydroguanosine 5'-triphosphate to cyclic pyranopterin monophosphate (cPMP). This is Cyclic pyranopterin monophosphate synthase from Listeria innocua serovar 6a (strain ATCC BAA-680 / CLIP 11262).